A 555-amino-acid polypeptide reads, in one-letter code: Poly(A) polymerase PAPa (555 aa).

The segment at 1 to 20 (MNNQAYGVTPPISVANSTPK) is disordered. Residues 86–88 (FGS), 99–101 (DID), aspartate 153, lysine 214, tyrosine 223, and 232–233 (GV) contribute to the ATP site. Positions 99, 101, and 153 each coordinate Mg(2+). Positions 532–555 (KRKRAVSKNEGKKKPKSVGTVSAA) are disordered.

It belongs to the poly(A) polymerase family. The cofactor is Mg(2+). Mn(2+) is required as a cofactor.

It is found in the nucleus. It carries out the reaction RNA(n) + ATP = RNA(n)-3'-adenine ribonucleotide + diphosphate. Its function is as follows. Polymerase that creates the 3'-poly(A) tail of mRNA's. May acquire specificity through interaction with a cleavage and polyadenylation factor. The chain is Poly(A) polymerase PAPa (PAPA) from Candida albicans (strain SC5314 / ATCC MYA-2876) (Yeast).